We begin with the raw amino-acid sequence, 1094 residues long: AP-3 complex subunit beta-1 (1094 aa).

Positions 1-11 (MSSNSFPYNEQ) are enriched in polar residues. 2 disordered regions span residues 1 to 31 (MSSNSFPYNEQSGGGEATELGQEATSTISPS) and 268 to 292 (DNGKNFYESDDDQKEKTDKKKKPYT). Residues Ser-276 and Ser-609 each carry the phosphoserine modification. Residues 662–811 (PAGKAKQENS…EKKTKQDRTP (150 aa)) are disordered. The span at 666 to 677 (AKQENSAKKFYS) shows a compositional bias: basic and acidic residues. Acidic residues-rich tracts occupy residues 678–696 (ESEEEEDSSDSSSDSESES) and 705–726 (ESGEEGDSNEDSSEDSSSEQDS). 2 stretches are compositionally biased toward basic and acidic residues: residues 727 to 738 (ESGRESGLENKR) and 748 to 764 (GKSDSEDGEKENEKSKT). 2 positions are modified to phosphoserine: Ser-750 and Ser-752. A compositionally biased stretch (low complexity) spans 765–777 (SDSSNDESSSIED). Positions 778 to 791 (SSSDSESESEPESE) are enriched in acidic residues. The segment covering 792–811 (SESRRVTKEKEKKTKQDRTP) has biased composition (basic and acidic residues).

The protein belongs to the adaptor complexes large subunit family. Adaptor protein complex 3 (AP-3) is a heterotetramer composed of two large adaptins (delta-type subunit AP3D1 and beta-type subunit AP3B1 or AP3B2), a medium adaptin (mu-type subunit AP3M1 or AP3M2) and a small adaptin (sigma-type subunit APS1 or AP3S2). AP-3 associates with the BLOC-1 complex. Interacts with KIF3A; interaction is direct; interaction is impaired by pyrophosphorylation of AP3B1. Phosphorylated on serine residues. Post-translationally, pyrophosphorylation by 5-diphosphoinositol pentakisphosphate (5-IP7) impairs interaction with KIF3A. Serine pyrophosphorylation is achieved by Mg(2+)-dependent, but enzyme independent transfer of a beta-phosphate from a inositol pyrophosphate to a pre-phosphorylated serine residue. Ubiquitously expressed.

It is found in the cytoplasmic vesicle. It localises to the clathrin-coated vesicle membrane. The protein resides in the golgi apparatus. Its function is as follows. Subunit of non-clathrin- and clathrin-associated adaptor protein complex 3 (AP-3) that plays a role in protein sorting in the late-Golgi/trans-Golgi network (TGN) and/or endosomes. The AP complexes mediate both the recruitment of clathrin to membranes and the recognition of sorting signals within the cytosolic tails of transmembrane cargo molecules. AP-3 appears to be involved in the sorting of a subset of transmembrane proteins targeted to lysosomes and lysosome-related organelles. In concert with the BLOC-1 complex, AP-3 is required to target cargos into vesicles assembled at cell bodies for delivery into neurites and nerve terminals. The protein is AP-3 complex subunit beta-1 (AP3B1) of Homo sapiens (Human).